A 210-amino-acid polypeptide reads, in one-letter code: Chaperone protein TorD (210 aa).

This sequence belongs to the TorD/DmsD family. TorD subfamily.

It is found in the cytoplasm. Its function is as follows. Involved in the biogenesis of TorA. Acts on TorA before the insertion of the molybdenum cofactor and, as a result, probably favors a conformation of the apoenzyme that is competent for acquiring the cofactor. The chain is Chaperone protein TorD from Salmonella choleraesuis (strain SC-B67).